We begin with the raw amino-acid sequence, 113 residues long: uncharacterized protein (113 aa).

The protein to H.pylori HP0245/JHP0230.

This is an uncharacterized protein from Campylobacter jejuni subsp. jejuni serotype O:2 (strain ATCC 700819 / NCTC 11168).